The following is a 232-amino-acid chain: Zinc-finger homeodomain protein 5 (232 aa).

Residues 1 to 11 show a composition bias toward acidic residues; it reads MELSEHEEDAG. Residues 1–25 form a disordered region; that stretch reads MELSEHEEDAGDVGGGCSSPPTPPH. A ZF-HD dimerization-type; degenerate zinc finger spans residues 40-86; sequence YHECLRNHAAASGGHVVDGCGEFMPASTEEPLACAACGCHRSFHRRD. The disordered stretch occupies residues 126 to 170; it reads GLPFPGYGTPSGGTGTTTASSSDERLRPSPVQPRRRSRTTFTREQ. The segment at residues 159–222 is a DNA-binding region (homeobox); it reads RRRSRTTFTR…NNKHSFKQKQ (64 aa).

In terms of assembly, homo- and heterodimer with other ZFHD proteins.

Its subcellular location is the nucleus. Its function is as follows. Putative transcription factor. This is Zinc-finger homeodomain protein 5 (ZHD5) from Oryza sativa subsp. indica (Rice).